The primary structure comprises 490 residues: GTPase Der (490 aa).

EngA-type G domains follow at residues 3–166 and 203–376; these read PVVA…MDDV and IKLA…DSST. GTP-binding positions include 9–16, 56–60, 118–121, 209–216, 256–260, and 321–324; these read GRPNVGKS, DTGGI, NKTD, DTAGV, and NKWD. Positions 377–461 constitute a KH-like domain; sequence RRVSTAMLTR…PIRIQFKEGE (85 aa).

Belongs to the TRAFAC class TrmE-Era-EngA-EngB-Septin-like GTPase superfamily. EngA (Der) GTPase family. In terms of assembly, associates with the 50S ribosomal subunit.

GTPase that plays an essential role in the late steps of ribosome biogenesis. This Salmonella choleraesuis (strain SC-B67) protein is GTPase Der.